The sequence spans 102 residues: Trp operon repressor homolog (102 aa).

A DNA-binding region spans residues 59–82 (QRQISQMLGVGIATITRGSNELKL).

This sequence belongs to the TrpR family. Homodimer.

The protein resides in the cytoplasm. Its function is as follows. This protein is an aporepressor. When complexed with L-tryptophan it binds the operator region of the trp operon and prevents the initiation of transcription. This is Trp operon repressor homolog from Vibrio vulnificus (strain CMCP6).